The chain runs to 451 residues: 3-phosphoshikimate 1-carboxyvinyltransferase (451 aa).

The 3-phosphoshikimate site is built by Lys38, Ser39, and Arg43. Lys38 provides a ligand contact to phosphoenolpyruvate. Residues Gly111 and Arg140 each coordinate phosphoenolpyruvate. 4 residues coordinate 3-phosphoshikimate: Ser185, Gln187, Asp335, and Lys362. Position 187 (Gln187) interacts with phosphoenolpyruvate. Asp335 acts as the Proton acceptor in catalysis. The phosphoenolpyruvate site is built by Arg366 and Arg408.

It belongs to the EPSP synthase family. In terms of assembly, monomer.

It is found in the cytoplasm. It carries out the reaction 3-phosphoshikimate + phosphoenolpyruvate = 5-O-(1-carboxyvinyl)-3-phosphoshikimate + phosphate. It participates in metabolic intermediate biosynthesis; chorismate biosynthesis; chorismate from D-erythrose 4-phosphate and phosphoenolpyruvate: step 6/7. Its function is as follows. Catalyzes the transfer of the enolpyruvyl moiety of phosphoenolpyruvate (PEP) to the 5-hydroxyl of shikimate-3-phosphate (S3P) to produce enolpyruvyl shikimate-3-phosphate and inorganic phosphate. The protein is 3-phosphoshikimate 1-carboxyvinyltransferase of Crocosphaera subtropica (strain ATCC 51142 / BH68) (Cyanothece sp. (strain ATCC 51142)).